Consider the following 376-residue polypeptide: Deoxyguanosinetriphosphate triphosphohydrolase-like protein (376 aa).

In terms of domain architecture, HD spans 62 to 198 (RLTHSLEVSA…AALADDISYI (137 aa)).

It belongs to the dGTPase family. Type 2 subfamily.

The sequence is that of Deoxyguanosinetriphosphate triphosphohydrolase-like protein from Rickettsia canadensis (strain McKiel).